Consider the following 106-residue polypeptide: UPF0145 protein AZOSEA16190 (106 aa).

This sequence belongs to the UPF0145 family.

This chain is UPF0145 protein AZOSEA16190, found in Aromatoleum aromaticum (strain DSM 19018 / LMG 30748 / EbN1) (Azoarcus sp. (strain EbN1)).